The sequence spans 549 residues: SH3 domain-containing protein 21 (549 aa).

The tract at residues 1–56 (MVQSELQLQPRAGRRADASNWGDFGSDKGGLGNTDIPPITPNSQRPPKLSNLTYDS) is disordered. Polar residues predominate over residues 41–54 (PNSQRPPKLSNLTY). The region spanning 65–126 (SCPETCRVLF…PDNFVIPPPP (62 aa)) is the SH3 domain. Disordered regions lie at residues 142-303 (PIKE…KPAK) and 332-479 (FKKE…KSKN). The segment covering 211–220 (QASQQHSASS) has biased composition (low complexity). Composition is skewed to basic and acidic residues over residues 267-280 (PVPKKAPDSDKIPA) and 332-342 (FKKEPSRDNDQ). Composition is skewed to polar residues over residues 343-365 (CQHLPQGGSTQRPESPAPSNNIQ) and 439-456 (VLPQESAPTPQVPHTIQQ). Residues 482–510 (MDVLESLKEEVGLLRSRLELLELKLEQKM) adopt a coiled-coil conformation. Positions 528 to 549 (QMMQRNRKSFKHAETQTETQTE) are disordered.

This Mus musculus (Mouse) protein is SH3 domain-containing protein 21 (Sh3d21).